Consider the following 220-residue polypeptide: Dual specificity phosphatase 29 (220 aa).

A compositionally biased stretch (polar residues) spans 1-15 (MTSGEVKTSLKNAYS). Residues 1 to 29 (MTSGEVKTSLKNAYSSAKRLSPKMEEEGE) form a disordered region. In terms of domain architecture, Tyrosine-protein phosphatase spans 54–202 (HVNEVWPKLY…LRELDKQLVQ (149 aa)). 146–153 (HCVMGRSR) provides a ligand contact to substrate. The active-site Phosphocysteine intermediate is cysteine 147.

This sequence belongs to the protein-tyrosine phosphatase family. Non-receptor class dual specificity subfamily. Homodimer. Interacts with PRKAA2.

The protein localises to the cytoplasm. It localises to the nucleus. It carries out the reaction O-phospho-L-tyrosyl-[protein] + H2O = L-tyrosyl-[protein] + phosphate. The enzyme catalyses O-phospho-L-seryl-[protein] + H2O = L-seryl-[protein] + phosphate. The catalysed reaction is O-phospho-L-threonyl-[protein] + H2O = L-threonyl-[protein] + phosphate. Its function is as follows. Dual specificity phosphatase able to dephosphorylate phosphotyrosine, phosphoserine and phosphothreonine residues within the same substrate, with a preference for phosphotyrosine as a substrate. Involved in the modulation of intracellular signaling cascades. In skeletal muscle regulates systemic glucose homeostasis by activating, AMPK, an energy sensor protein kinase. Affects MAP kinase signaling though modulation of the MAPK1/2 cascade in skeletal muscle promoting muscle cell differentiation, development and atrophy. This is Dual specificity phosphatase 29 from Homo sapiens (Human).